Here is a 426-residue protein sequence, read N- to C-terminus: Fatty alcohol:caffeoyl-CoA acyltransferase (426 aa).

Active-site proton acceptor residues include His-162 and Asp-374.

Belongs to the plant acyltransferase family. Expressed in the outermost circumference of mature roots, the endodermis of young roots and in the seed coat of developing seeds. Expressed in outer integument layer 1 of the seed coat.

In terms of biological role, involved in the synthesis of alkyl hydroxycinnamates in root waxes. Functions as a fatty alcohol:hydroxy cinnamoyl-CoA acyltransferase with apparent preference for caffeoyl-CoA. This is Fatty alcohol:caffeoyl-CoA acyltransferase from Arabidopsis thaliana (Mouse-ear cress).